The chain runs to 37 residues: Photosystem I reaction center subunit VIII (37 aa).

The chain crosses the membrane as a helical span at residues 10-30 (IFVPLVGLVFPAIAMASLSLY).

This sequence belongs to the PsaI family.

The protein localises to the plastid. It localises to the chloroplast thylakoid membrane. May help in the organization of the PsaL subunit. This is Photosystem I reaction center subunit VIII from Gossypium barbadense (Sea Island cotton).